The following is a 188-amino-acid chain: Photosystem I assembly protein Ycf4 (188 aa).

2 helical membrane passes run 22–42 (LGWA…GLSS) and 68–88 (LVMC…WCAI).

This sequence belongs to the Ycf4 family.

It is found in the plastid. Its subcellular location is the chloroplast thylakoid membrane. Functionally, seems to be required for the assembly of the photosystem I complex. In Zygnema circumcarinatum (Green alga), this protein is Photosystem I assembly protein Ycf4.